The following is a 558-amino-acid chain: Chaperonin GroEL 1 (558 aa).

ATP is bound by residues 29-32, 86-90, Gly-413, and Asp-494; these read TLGP and DGTTT.

This sequence belongs to the chaperonin (HSP60) family. Forms a cylinder of 14 subunits composed of two heptameric rings stacked back-to-back. Interacts with the co-chaperonin GroES.

The protein resides in the cytoplasm. The enzyme catalyses ATP + H2O + a folded polypeptide = ADP + phosphate + an unfolded polypeptide.. Together with its co-chaperonin GroES, plays an essential role in assisting protein folding. The GroEL-GroES system forms a nano-cage that allows encapsulation of the non-native substrate proteins and provides a physical environment optimized to promote and accelerate protein folding. The chain is Chaperonin GroEL 1 from Acaryochloris marina (strain MBIC 11017).